The sequence spans 493 residues: 3-octaprenyl-4-hydroxybenzoate carboxy-lyase (493 aa).

N172 provides a ligand contact to Mn(2+). Residues 175-177 (IYR), 189-191 (RWL), and 194-195 (RG) each bind prenylated FMN. A Mn(2+)-binding site is contributed by E238. The Proton donor role is filled by D287.

It belongs to the UbiD family. As to quaternary structure, homohexamer. Prenylated FMN serves as cofactor. Requires Mn(2+) as cofactor.

The protein localises to the cell membrane. It carries out the reaction a 4-hydroxy-3-(all-trans-polyprenyl)benzoate + H(+) = a 2-(all-trans-polyprenyl)phenol + CO2. It functions in the pathway cofactor biosynthesis; ubiquinone biosynthesis. Its function is as follows. Catalyzes the decarboxylation of 3-octaprenyl-4-hydroxy benzoate to 2-octaprenylphenol, an intermediate step in ubiquinone biosynthesis. This chain is 3-octaprenyl-4-hydroxybenzoate carboxy-lyase, found in Shewanella sediminis (strain HAW-EB3).